The primary structure comprises 270 residues: Probable feruloyl esterase C (270 aa).

Positions 1–21 (MIKSIILQAIMVLSTLTSVHG) are cleaved as a signal peptide. An N-linked (GlcNAc...) asparagine glycan is attached at N23.

Belongs to the faeC family.

It localises to the secreted. It carries out the reaction feruloyl-polysaccharide + H2O = ferulate + polysaccharide.. Functionally, involved in degradation of plant cell walls. Hydrolyzes the feruloyl-arabinose ester bond in arabinoxylans, and the feruloyl-galactose ester bond in pectin. Active against paranitrophenyl-acetate, methyl ferulate and wheat arabinoxylan. The protein is Probable feruloyl esterase C (faeC) of Aspergillus oryzae (strain ATCC 42149 / RIB 40) (Yellow koji mold).